We begin with the raw amino-acid sequence, 362 residues long: Sulfate/thiosulfate import ATP-binding protein CysA (362 aa).

Residues 3–237 (IEINNISKYF…PASRFVMEFL (235 aa)) enclose the ABC transporter domain. 35–42 (GPSGSGKT) contacts ATP.

Belongs to the ABC transporter superfamily. Sulfate/tungstate importer (TC 3.A.1.6) family. The complex is composed of two ATP-binding proteins (CysA), two transmembrane proteins (CysT and CysW) and a solute-binding protein (CysP).

The protein resides in the cell inner membrane. It catalyses the reaction sulfate(out) + ATP + H2O = sulfate(in) + ADP + phosphate + H(+). The catalysed reaction is thiosulfate(out) + ATP + H2O = thiosulfate(in) + ADP + phosphate + H(+). Functionally, part of the ABC transporter complex CysAWTP involved in sulfate/thiosulfate import. Responsible for energy coupling to the transport system. The chain is Sulfate/thiosulfate import ATP-binding protein CysA from Photorhabdus laumondii subsp. laumondii (strain DSM 15139 / CIP 105565 / TT01) (Photorhabdus luminescens subsp. laumondii).